Consider the following 197-residue polypeptide: Recombination protein RecR (197 aa).

The C4-type zinc finger occupies 56–71; that stretch reads CKRCGSYAETEICNIC. The Toprim domain maps to 79-174; it reads HTFCVVEQPE…DVTRIAYGIT (96 aa).

Belongs to the RecR family.

May play a role in DNA repair. It seems to be involved in an RecBC-independent recombinational process of DNA repair. It may act with RecF and RecO. This Leptospira borgpetersenii serovar Hardjo-bovis (strain JB197) protein is Recombination protein RecR.